An 878-amino-acid chain; its full sequence is Alanine--tRNA ligase (878 aa).

Residues His-567, His-571, Cys-669, and His-673 each coordinate Zn(2+).

The protein belongs to the class-II aminoacyl-tRNA synthetase family. Zn(2+) is required as a cofactor.

It localises to the cytoplasm. It catalyses the reaction tRNA(Ala) + L-alanine + ATP = L-alanyl-tRNA(Ala) + AMP + diphosphate. Functionally, catalyzes the attachment of alanine to tRNA(Ala) in a two-step reaction: alanine is first activated by ATP to form Ala-AMP and then transferred to the acceptor end of tRNA(Ala). Also edits incorrectly charged Ser-tRNA(Ala) and Gly-tRNA(Ala) via its editing domain. The sequence is that of Alanine--tRNA ligase from Rickettsia akari (strain Hartford).